The primary structure comprises 202 residues: NADH-ubiquinone oxidoreductase chain 6 (202 aa).

5 helical membrane-spanning segments follow: residues 1 to 21 (MVTM…IMVI), 29 to 49 (SVFW…LLGV), 52 to 72 (IALM…LFVI), 96 to 116 (VPIG…SWLI), and 156 to 176 (YYLF…AIVL).

Belongs to the complex I subunit 6 family.

It localises to the mitochondrion membrane. It carries out the reaction a ubiquinone + NADH + 5 H(+)(in) = a ubiquinol + NAD(+) + 4 H(+)(out). Core subunit of the mitochondrial membrane respiratory chain NADH dehydrogenase (Complex I) that is believed to belong to the minimal assembly required for catalysis. Complex I functions in the transfer of electrons from NADH to the respiratory chain. The immediate electron acceptor for the enzyme is believed to be ubiquinone. In Metridium senile (Brown sea anemone), this protein is NADH-ubiquinone oxidoreductase chain 6 (ND6).